Consider the following 122-residue polypeptide: MIQSFTRLNVADNSGAKEIMCIKVLGGSHKRYASVGSVIVASVKKAIPNGKVKFGLVVKTVVVRTKKEIQRKNGSLVRFDDNAAVILDAKKDPVGTRIFGPVSREVRYANFMKIISLAPEVV.

Belongs to the universal ribosomal protein uL14 family. Part of the 50S ribosomal subunit. Forms a cluster with proteins L3 and L19. In the 70S ribosome, L14 and L19 interact and together make contacts with the 16S rRNA in bridges B5 and B8.

Its function is as follows. Binds to 23S rRNA. Forms part of two intersubunit bridges in the 70S ribosome. This chain is Large ribosomal subunit protein uL14, found in Helicobacter pylori (strain J99 / ATCC 700824) (Campylobacter pylori J99).